The chain runs to 1044 residues: Pre-mRNA-splicing factor ATP-dependent RNA helicase DEAH1 (1044 aa).

Positions 106-206 (EVVVEKKSSV…TLSKKEKEEA (101 aa)) are disordered. A compositionally biased stretch (basic and acidic residues) spans 108–121 (VVEKKSSVSESRKS). The segment covering 122–132 (DKGKKRFRKKS) has biased composition (basic residues). S135 and S138 each carry phosphoserine. Positions 157 to 166 (EEDDGSESEE) are enriched in acidic residues. Residues 167–206 (ERVRDQKEREELEQHLKDRDTARTRKLTEQTLSKKEKEEA) show a composition bias toward basic and acidic residues. In terms of domain architecture, Helicase ATP-binding spans 414–577 (LKAVEEHQVL…FDTAPIFSFP (164 aa)). 427 to 434 (GDTGSGKT) is an ATP binding site. Positions 524–527 (DEAH) match the DEAH box motif. The region spanning 600–775 (IVTILTIHVR…SVVLALKSLG (176 aa)) is the Helicase C-terminal domain.

It belongs to the DEAD box helicase family. DEAH subfamily. PRP2 sub-subfamily. As to expression, widely expressed.

It catalyses the reaction ATP + H2O = ADP + phosphate + H(+). Involved in pre-mRNA splicing. The polypeptide is Pre-mRNA-splicing factor ATP-dependent RNA helicase DEAH1 (Arabidopsis thaliana (Mouse-ear cress)).